A 918-amino-acid polypeptide reads, in one-letter code: Protein translocase subunit SecA (918 aa).

ATP contacts are provided by residues glutamine 87, 105–109 (GEGKT), and aspartate 516. Zn(2+) contacts are provided by cysteine 902, cysteine 904, cysteine 913, and histidine 914.

This sequence belongs to the SecA family. Monomer and homodimer. Part of the essential Sec protein translocation apparatus which comprises SecA, SecYEG and auxiliary proteins SecDF-YajC and YidC. Zn(2+) is required as a cofactor.

Its subcellular location is the cell inner membrane. The protein localises to the cytoplasm. The catalysed reaction is ATP + H2O + cellular proteinSide 1 = ADP + phosphate + cellular proteinSide 2.. Its function is as follows. Part of the Sec protein translocase complex. Interacts with the SecYEG preprotein conducting channel. Has a central role in coupling the hydrolysis of ATP to the transfer of proteins into and across the cell membrane, serving both as a receptor for the preprotein-SecB complex and as an ATP-driven molecular motor driving the stepwise translocation of polypeptide chains across the membrane. This is Protein translocase subunit SecA from Methylibium petroleiphilum (strain ATCC BAA-1232 / LMG 22953 / PM1).